Reading from the N-terminus, the 945-residue chain is Nonsense-mediated mRNA decay factor SMG8 (945 aa).

Disordered stretches follow at residues 563–604 (RAEP…SANE) and 633–671 (AEAEVEEAEVCDKGSQDNSTSSDTSTESEIELQPKERSA).

It belongs to the SMG8 family.

Involved in nonsense-mediated decay (NMD) of mRNAs containing premature stop codons. Probable component of kinase complex containing nonC and recruited to stalled ribosomes. The protein is Nonsense-mediated mRNA decay factor SMG8 of Drosophila grimshawi (Hawaiian fruit fly).